Consider the following 109-residue polypeptide: T-cell surface glycoprotein CD1b (109 aa).

A signal peptide spans 1–18; the sequence is MLLLPLLLLAGRFPGGDN. N-linked (GlcNAc...) asparagine glycosylation is found at asparagine 38 and asparagine 75.

In terms of assembly, heterodimer with B2M (beta-2-microglobulin). Interacts with saposin C. In terms of tissue distribution, expressed on cortical thymocytes, on certain T-cell leukemias, and in various other tissues.

It localises to the cell membrane. The protein localises to the endosome membrane. The protein resides in the lysosome membrane. Its function is as follows. Antigen-presenting protein that binds self and non-self lipid and glycolipid antigens and presents them to T-cell receptors on natural killer T-cells. This chain is T-cell surface glycoprotein CD1b (CD1B), found in Oryctolagus cuniculus (Rabbit).